The sequence spans 590 residues: Multidrug resistance-like ATP-binding protein MdlA (590 aa).

Residues 18–303 (YLGAVALLVI…LAWMFNIVER (286 aa)) form the ABC transmembrane type-1 domain. 6 helical membrane-spanning segments follow: residues 23–43 (ALLV…GIVV), 53–73 (TGQI…VYLL), 134–154 (GVLT…MMST), 155–175 (QISW…AIMI), 248–268 (IYIA…WMVV), and 280–300 (FMMY…MFNI). Positions 337–570 (VNIHQFTYPQ…SGWYRDMYRY (234 aa)) constitute an ABC transporter domain. 369–376 (GPTGSGKS) is an ATP binding site.

This sequence belongs to the ABC transporter superfamily. Drug exporter-2 (TC 3.A.1.117) family.

The protein localises to the cell inner membrane. The catalysed reaction is ATP + H2O + xenobioticSide 1 = ADP + phosphate + xenobioticSide 2.. The chain is Multidrug resistance-like ATP-binding protein MdlA (mdlA) from Escherichia coli (strain K12).